The primary structure comprises 555 residues: Phosphomethylpyrimidine synthase (555 aa).

Residues 78–104 (VRDRWGFDNGSAESTKGELSMSERKPR) form a disordered region. Residues Asn-191, Met-220, Tyr-249, His-285, 305–307 (SRG), 346–349 (DALR), and Glu-385 contribute to the substrate site. His-389 is a Zn(2+) binding site. Tyr-412 contributes to the substrate binding site. Zn(2+) is bound at residue His-453. [4Fe-4S] cluster contacts are provided by Cys-535, Cys-538, and Cys-543.

The protein belongs to the ThiC family. Requires [4Fe-4S] cluster as cofactor.

The catalysed reaction is 5-amino-1-(5-phospho-beta-D-ribosyl)imidazole + S-adenosyl-L-methionine = 4-amino-2-methyl-5-(phosphooxymethyl)pyrimidine + CO + 5'-deoxyadenosine + formate + L-methionine + 3 H(+). Its pathway is cofactor biosynthesis; thiamine diphosphate biosynthesis. In terms of biological role, catalyzes the synthesis of the hydroxymethylpyrimidine phosphate (HMP-P) moiety of thiamine from aminoimidazole ribotide (AIR) in a radical S-adenosyl-L-methionine (SAM)-dependent reaction. This is Phosphomethylpyrimidine synthase from Chlorobaculum parvum (strain DSM 263 / NCIMB 8327) (Chlorobium vibrioforme subsp. thiosulfatophilum).